Here is a 299-residue protein sequence, read N- to C-terminus: Regucalcin (299 aa).

A divalent metal cation is bound at residue Glu-18. Substrate contacts are provided by Arg-101, Asn-103, and Glu-121. A divalent metal cation-binding residues include Asn-154 and Asp-204. Asp-204 serves as the catalytic Proton donor/acceptor.

Belongs to the SMP-30/CGR1 family. Zn(2+) serves as cofactor. It depends on Mn(2+) as a cofactor. Ca(2+) is required as a cofactor. Requires Mg(2+) as cofactor. As to expression, expressed in the liver, and in the pronephros from the late tadpole stage.

It localises to the cytoplasm. The enzyme catalyses D-glucono-1,5-lactone + H2O = D-gluconate + H(+). It participates in cofactor biosynthesis; L-ascorbate biosynthesis via UDP-alpha-D-glucuronate pathway; L-ascorbate from UDP-alpha-D-glucuronate: step 3/4. Gluconolactonase with low activity towards other sugar lactones, including gulonolactone and galactonolactone. Catalyzes a key step in ascorbic acid (vitamin C) biosynthesis. Can also hydrolyze diisopropyl phosphorofluoridate and phenylacetate (in vitro). Calcium-binding protein. Modulates Ca(2+) signaling, and Ca(2+)-dependent cellular processes and enzyme activities. The sequence is that of Regucalcin from Xenopus laevis (African clawed frog).